The chain runs to 363 residues: MASVSFEQVTKQFDDYVAVNNLNLEIEDGEFLVFVGPSGCGKTTSLRLLAGLETVSQGQICIGDRRVNELSPKDRDIAMVFQSYALYPHMSVYENMAFSLDLQGKPKEEIRQRVCSAAELLGIEKLLHRKPKELSGGQRQRVAVGRAIVRKPSVFLMDEPLSNLDAMLRVQARKEISKLHSDLATTFIYVTHDQVEAMTMGDRIAVMKDGILQQVDSPANLYNQPANLFVAGFIGSPAMNFFQVERLSQEGKEKLSLDGVVLPMPDSVAKNGDRPLTLGIRPENIYHPQYLPLEIEPMELPATVNLVEMMGNELIVYAQTPAGTEFVARIDPRVNIKQKDSVKFVVDTQRFYYFDREMETAIF.

In terms of domain architecture, ABC transporter spans 4 to 234; the sequence is VSFEQVTKQF…PANLFVAGFI (231 aa). 36-43 lines the ATP pocket; it reads GPSGCGKT.

This sequence belongs to the ABC transporter superfamily. As to quaternary structure, the complex is composed of two ATP-binding proteins (GgtA), two transmembrane proteins (GgtC and GgtD) and a solute-binding protein (GgtB).

It is found in the cell membrane. Functionally, part of the ABC transporter complex GgtABCD involved in the uptake of the osmoprotective compounds glucosylglycerol (GG), sucrose and trehalose. Responsible for energy coupling to the transport system. The chain is Osmoprotective compounds uptake ATP-binding protein GgtA from Synechocystis sp. (strain ATCC 27184 / PCC 6803 / Kazusa).